The sequence spans 257 residues: Nickel import system ATP-binding protein NikD (257 aa).

Positions 4–245 (IDIQNLTIKN…HLHPYTERLI (242 aa)) constitute an ABC transporter domain. 37 to 44 (GESGAGKS) contacts ATP.

This sequence belongs to the ABC transporter superfamily. In terms of assembly, the complex is composed of two ATP-binding proteins (NikD and NikE), two transmembrane proteins (NikB and NikC) and a solute-binding protein (NikA).

The protein localises to the cell membrane. It catalyses the reaction Ni(2+)(out) + ATP + H2O = Ni(2+)(in) + ADP + phosphate + H(+). Its function is as follows. Part of the ABC transporter complex NikABCDE (Opp2) involved in nickel import. Probably responsible for energy coupling to the transport system. This is Nickel import system ATP-binding protein NikD from Staphylococcus aureus (strain MSSA476).